The primary structure comprises 322 residues: HPr kinase/phosphorylase (322 aa).

Active-site residues include His-146 and Lys-167. 161–168 is an ATP binding site; sequence GDSGLGKS. Ser-168 contacts Mg(2+). The Proton acceptor; for phosphorylation activity. Proton donor; for dephosphorylation activity role is filled by Asp-185. The important for the catalytic mechanism of both phosphorylation and dephosphorylation stretch occupies residues 209 to 218; sequence LEVRGLGLLD. Residue Glu-210 coordinates Mg(2+). Arg-250 is a catalytic residue. The interval 271–276 is important for the catalytic mechanism of dephosphorylation; the sequence is QVAAGR.

The protein belongs to the HPrK/P family. In terms of assembly, homohexamer. It depends on Mg(2+) as a cofactor.

The enzyme catalyses [HPr protein]-L-serine + ATP = [HPr protein]-O-phospho-L-serine + ADP + H(+). The catalysed reaction is [HPr protein]-O-phospho-L-serine + phosphate + H(+) = [HPr protein]-L-serine + diphosphate. Catalyzes the ATP- as well as the pyrophosphate-dependent phosphorylation of a specific serine residue in HPr, a phosphocarrier protein of the phosphoenolpyruvate-dependent sugar phosphotransferase system (PTS). HprK/P also catalyzes the pyrophosphate-producing, inorganic phosphate-dependent dephosphorylation (phosphorolysis) of seryl-phosphorylated HPr (P-Ser-HPr). This chain is HPr kinase/phosphorylase, found in Burkholderia multivorans (strain ATCC 17616 / 249).